A 400-amino-acid chain; its full sequence is Argininosuccinate synthase (400 aa).

ATP-binding positions include 10 to 18 (AYSGGVDTS) and Ala38. Residue Tyr89 participates in L-citrulline binding. Gly119 serves as a coordination point for ATP. L-aspartate-binding residues include Thr121, Asn125, and Asp126. Position 125 (Asn125) interacts with L-citrulline. Residues Arg129, Ser177, Ser186, Glu262, and Tyr274 each contribute to the L-citrulline site.

The protein belongs to the argininosuccinate synthase family. Type 1 subfamily. Homotetramer.

The protein resides in the cytoplasm. It carries out the reaction L-citrulline + L-aspartate + ATP = 2-(N(omega)-L-arginino)succinate + AMP + diphosphate + H(+). It functions in the pathway amino-acid biosynthesis; L-arginine biosynthesis; L-arginine from L-ornithine and carbamoyl phosphate: step 2/3. The chain is Argininosuccinate synthase from Trichormus variabilis (strain ATCC 29413 / PCC 7937) (Anabaena variabilis).